Here is a 453-residue protein sequence, read N- to C-terminus: uncharacterized protein (453 aa).

The 59-residue stretch at 5–63 folds into the TRAM domain; it reads LLKKNQSIELTIEDLTHDGSGVGKIDGYPLFIPNTLPGEKVTAKIIKLNKNYGFARMEN. Positions 76, 82, 85, and 162 each coordinate [4Fe-4S] cluster. Positions 285, 314, 335, and 383 each coordinate S-adenosyl-L-methionine. The Nucleophile role is filled by cysteine 410.

It belongs to the class I-like SAM-binding methyltransferase superfamily. RNA M5U methyltransferase family.

This is an uncharacterized protein from Listeria monocytogenes serotype 4b (strain F2365).